The sequence spans 409 residues: Putative competence-damage inducible protein (409 aa).

This sequence belongs to the CinA family.

The chain is Putative competence-damage inducible protein from Clostridium botulinum (strain Okra / Type B1).